The sequence spans 83 residues: ATP synthase subunit c (83 aa).

A run of 2 helical transmembrane segments spans residues 9 to 29 (LICVGAALSIGLAGLGAGIGI) and 51 to 71 (MVFMILGMALAESIAIYGLVI).

Belongs to the ATPase C chain family. As to quaternary structure, F-type ATPases have 2 components, F(1) - the catalytic core - and F(0) - the membrane proton channel. F(1) has five subunits: alpha(3), beta(3), gamma(1), delta(1), epsilon(1). F(0) has three main subunits: a(1), b(2) and c(10-14). The alpha and beta chains form an alternating ring which encloses part of the gamma chain. F(1) is attached to F(0) by a central stalk formed by the gamma and epsilon chains, while a peripheral stalk is formed by the delta and b chains.

It localises to the cell inner membrane. Functionally, f(1)F(0) ATP synthase produces ATP from ADP in the presence of a proton or sodium gradient. F-type ATPases consist of two structural domains, F(1) containing the extramembraneous catalytic core and F(0) containing the membrane proton channel, linked together by a central stalk and a peripheral stalk. During catalysis, ATP synthesis in the catalytic domain of F(1) is coupled via a rotary mechanism of the central stalk subunits to proton translocation. Key component of the F(0) channel; it plays a direct role in translocation across the membrane. A homomeric c-ring of between 10-14 subunits forms the central stalk rotor element with the F(1) delta and epsilon subunits. In Desulfotalea psychrophila (strain LSv54 / DSM 12343), this protein is ATP synthase subunit c.